The sequence spans 98 residues: NADH-ubiquinone oxidoreductase chain 4L (98 aa).

The next 3 helical transmembrane spans lie at Met1 to Leu21, Ser29 to Leu49, and Val59 to Val79.

Belongs to the complex I subunit 4L family. In terms of assembly, core subunit of respiratory chain NADH dehydrogenase (Complex I) which is composed of 45 different subunits.

It is found in the mitochondrion inner membrane. The enzyme catalyses a ubiquinone + NADH + 5 H(+)(in) = a ubiquinol + NAD(+) + 4 H(+)(out). Its function is as follows. Core subunit of the mitochondrial membrane respiratory chain NADH dehydrogenase (Complex I) which catalyzes electron transfer from NADH through the respiratory chain, using ubiquinone as an electron acceptor. Part of the enzyme membrane arm which is embedded in the lipid bilayer and involved in proton translocation. This Hemiechinus auritus (Long-eared hedgehog) protein is NADH-ubiquinone oxidoreductase chain 4L (MT-ND4L).